A 97-amino-acid polypeptide reads, in one-letter code: MKIRPLHDRVIIKRKEAESKSAGGIVLTGSAAGKSTRGKVLAVGNGRILDNGETKPLDVKIGDIVIFNDGYGVKVEKIDNDEVLIMSESDILAIVEK.

The protein belongs to the GroES chaperonin family. As to quaternary structure, heptamer of 7 subunits arranged in a ring. Interacts with the chaperonin GroEL.

Its subcellular location is the cytoplasm. In terms of biological role, together with the chaperonin GroEL, plays an essential role in assisting protein folding. The GroEL-GroES system forms a nano-cage that allows encapsulation of the non-native substrate proteins and provides a physical environment optimized to promote and accelerate protein folding. GroES binds to the apical surface of the GroEL ring, thereby capping the opening of the GroEL channel. This Wigglesworthia glossinidia brevipalpis protein is Co-chaperonin GroES.